The chain runs to 315 residues: Cross-pathway control WD-repeat protein 2 (315 aa).

WD repeat units follow at residues 14 to 54 (GHKG…DSYG), 62 to 101 (GHNHFVSDVVISSDGQFALSSSWDHTLRLWDLNTGATTRR), 104 to 144 (GHTS…YDIK), 147 to 188 (CHTE…LKTN), 191 to 230 (GHTGYINTVSVSPDGSLAASGGKDGITMLWDLNEGKHLYS), 232 to 270 (EAGDIVNALVFSPNRYWLCAATASCVKIFDLESKSIVDE), and 282 to 315 (GRQPECVSIAWSADGQTLFAGFTDNQLRVWTVTS).

It belongs to the WD repeat G protein beta family. Ribosomal protein RACK1 subfamily.

In terms of biological role, component of the ribosome, a large ribonucleoprotein complex responsible for the synthesis of proteins in the cell. The small ribosomal subunit (SSU) binds messenger RNAs (mRNAs) and translates the encoded message by selecting cognate aminoacyl-transfer RNA (tRNA) molecules. The large subunit (LSU) contains the ribosomal catalytic site termed the peptidyl transferase center (PTC), which catalyzes the formation of peptide bonds, thereby polymerizing the amino acids delivered by tRNAs into a polypeptide chain. The nascent polypeptides leave the ribosome through a tunnel in the LSU and interact with protein factors that function in enzymatic processing, targeting, and the membrane insertion of nascent chains at the exit of the ribosomal tunnel. Plays in important role in the regulation of vegetative growth and fruiting body development. Especially, positively regulates the expression of genes involved in fruiting body development such as FVFD30 and FVFD16, as well as genes encoding for lectins and hydrophobins. Also regulates the expression of genes involved in cAMP signaling pathway. The protein is Cross-pathway control WD-repeat protein 2 of Flammulina velutipes (Agaricus velutipes).